Here is a 312-residue protein sequence, read N- to C-terminus: DNA primase small subunit PriS (312 aa).

Catalysis depends on residues D88, D90, and D215.

The protein belongs to the eukaryotic-type primase small subunit family. As to quaternary structure, heterodimer of a small subunit (PriS) and a large subunit (PriL). The cofactor is Mg(2+). It depends on Mn(2+) as a cofactor.

Functionally, catalytic subunit of DNA primase, an RNA polymerase that catalyzes the synthesis of short RNA molecules used as primers for DNA polymerase during DNA replication. The small subunit contains the primase catalytic core and has DNA synthesis activity on its own. Binding to the large subunit stabilizes and modulates the activity, increasing the rate of DNA synthesis while decreasing the length of the DNA fragments, and conferring RNA synthesis capability. The DNA polymerase activity may enable DNA primase to also catalyze primer extension after primer synthesis. May also play a role in DNA repair. In Pyrobaculum aerophilum (strain ATCC 51768 / DSM 7523 / JCM 9630 / CIP 104966 / NBRC 100827 / IM2), this protein is DNA primase small subunit PriS.